Consider the following 562-residue polypeptide: Phosphopantothenoylcysteine decarboxylase subunit SIS2 (562 aa).

Positions 1–10 (MTAVASTSGK) are enriched in polar residues. 3 disordered regions span residues 1–63 (MTAV…SNAT), 97–165 (FSDL…KDYD), and 490–562 (GYPK…DKHQ). Positions 27–42 (GQKEILLDHEDAKGKD) are enriched in basic and acidic residues. Polar residues-rich tracts occupy residues 44–63 (IINS…SNAT) and 99–113 (DLKQ…TQLK). Phosphoserine is present on residues serine 47, serine 50, serine 54, and serine 56. The span at 121 to 134 (SPNSNPAPVSNSIP) shows a compositional bias: low complexity. The segment covering 142–156 (NHTNTSRTTQLSGSP) has biased composition (polar residues). Serine 155 carries the phosphoserine modification. Residues 496 to 553 (EEEDDDEDEEEDDDEEEDTEDKNENNNDDDDDDDDDDDDDDDDDDDDDDDDEDEDEAE) show a composition bias toward acidic residues.

This sequence belongs to the HFCD (homooligomeric flavin containing Cys decarboxylase) superfamily. As to quaternary structure, interacts with the C-terminal domain of PPZ1. Component of the phosphopantothenoylcysteine decarboxylase (PPCDC) complex, a heterotrimer composed of CAB3, SIS2 and VHS3.

Its subcellular location is the nucleus. It localises to the cytoplasm. In terms of biological role, component of the phosphopantothenoylcysteine decarboxylase (PPCDC) involved in the coenzyme A synthesis. Acts as an inhibitory subunit of protein phosphatase PPZ1, which is involved in many cellular processes such as G1-S transition or salt tolerance. Also modulates the expression of the ENA1 ATPase. The chain is Phosphopantothenoylcysteine decarboxylase subunit SIS2 (SIS2) from Saccharomyces cerevisiae (strain ATCC 204508 / S288c) (Baker's yeast).